The primary structure comprises 160 residues: Serine-protein kinase RsbW (160 aa).

Belongs to the anti-sigma-factor family.

It carries out the reaction L-seryl-[protein] + ATP = O-phospho-L-seryl-[protein] + ADP + H(+). The catalysed reaction is L-threonyl-[protein] + ATP = O-phospho-L-threonyl-[protein] + ADP + H(+). Negative regulator of sigma-B activity. Phosphorylates and inactivates its specific antagonist protein, RsbV. Upon phosphorylation of RsbV, RsbW is released and binds to sigma-B, thereby blocking its ability to form an RNA polymerase holoenzyme (E-sigma-B). In Bacillus mycoides (strain KBAB4) (Bacillus weihenstephanensis), this protein is Serine-protein kinase RsbW.